A 405-amino-acid polypeptide reads, in one-letter code: Bifunctional enzyme IspD/IspF (405 aa).

The 2-C-methyl-D-erythritol 4-phosphate cytidylyltransferase stretch occupies residues 1-246 (MLQMPSKQPI…KLSASLLPDV (246 aa)). The interval 247-405 (RTGNGYDVHQ…TATVVYRGRT (159 aa)) is 2-C-methyl-D-erythritol 2,4-cyclodiphosphate synthase. Asp-253 and His-255 together coordinate a divalent metal cation. Residues 253-255 (DVH) and 279-280 (HS) each bind 4-CDP-2-C-methyl-D-erythritol 2-phosphate. Residue His-287 coordinates a divalent metal cation. 4-CDP-2-C-methyl-D-erythritol 2-phosphate-binding positions include 301–303 (DIG), 377–380 (TTNE), Phe-384, and Arg-387.

In the N-terminal section; belongs to the IspD/TarI cytidylyltransferase family. IspD subfamily. It in the C-terminal section; belongs to the IspF family. The cofactor is a divalent metal cation.

It catalyses the reaction 2-C-methyl-D-erythritol 4-phosphate + CTP + H(+) = 4-CDP-2-C-methyl-D-erythritol + diphosphate. It carries out the reaction 4-CDP-2-C-methyl-D-erythritol 2-phosphate = 2-C-methyl-D-erythritol 2,4-cyclic diphosphate + CMP. It functions in the pathway isoprenoid biosynthesis; isopentenyl diphosphate biosynthesis via DXP pathway; isopentenyl diphosphate from 1-deoxy-D-xylulose 5-phosphate: step 2/6. The protein operates within isoprenoid biosynthesis; isopentenyl diphosphate biosynthesis via DXP pathway; isopentenyl diphosphate from 1-deoxy-D-xylulose 5-phosphate: step 4/6. In terms of biological role, bifunctional enzyme that catalyzes the formation of 4-diphosphocytidyl-2-C-methyl-D-erythritol from CTP and 2-C-methyl-D-erythritol 4-phosphate (MEP) (IspD), and catalyzes the conversion of 4-diphosphocytidyl-2-C-methyl-D-erythritol 2-phosphate (CDP-ME2P) to 2-C-methyl-D-erythritol 2,4-cyclodiphosphate (ME-CPP) with a corresponding release of cytidine 5-monophosphate (CMP) (IspF). The polypeptide is Bifunctional enzyme IspD/IspF (Rhizobium etli (strain CIAT 652)).